A 1045-amino-acid chain; its full sequence is B3 domain-containing protein REM13 (1045 aa).

A DNA-binding region (TF-B3 1) is located at residues 7–96; the sequence is YPQFFHTLVP…VFHVSNLGPN (90 aa). Residues 121–147 are disordered; it reads NNGDVCDSEELPKEKKAKTNSEEADAV. Residues 130–141 are compositionally biased toward basic and acidic residues; sequence ELPKEKKAKTNS. 2 consecutive DNA-binding regions (TF-B3) follow at residues 157–253 and 305–398; these read CFMA…FCPT and FVTF…CSPE. A disordered region spans residues 423-449; sequence NRDKISNNDKEENMSWERKKDHLKSRD. A DNA-binding region (TF-B3 4) is located at residues 474–570; the sequence is SNDSCLVVVS…TPVLSLCPAD (97 aa). Residues 606 to 625 are disordered; that stretch reads IKDDNSKEKNDKEESKSVDG. DNA-binding regions (TF-B3) lie at residues 643 to 738, 815 to 910, and 940 to 1035; these read FVTL…LRTE, FVTF…LRTK, and FVTL…LKFS.

Its subcellular location is the nucleus. The sequence is that of B3 domain-containing protein REM13 (REM13) from Arabidopsis thaliana (Mouse-ear cress).